The primary structure comprises 218 residues: Hypoxanthine-guanine phosphoribosyltransferase (218 aa).

A2 carries the N-acetylalanine modification. K69 contacts GMP. An N6-acetyllysine modification is found at K103. A Glycyl lysine isopeptide (Lys-Gly) (interchain with G-Cter in SUMO1); alternate cross-link involves residue K115. Residue K115 forms a Glycyl lysine isopeptide (Lys-Gly) (interchain with G-Cter in SUMO2); alternate linkage. GMP-binding positions include 134-142 (EDIIDTGKT), K166, 186-188 (KFV), and D194. D138 serves as the catalytic Proton acceptor. Position 142 is a phosphothreonine (T142). A Mg(2+)-binding site is contributed by D194.

This sequence belongs to the purine/pyrimidine phosphoribosyltransferase family. In terms of assembly, homotetramer. Mg(2+) is required as a cofactor.

Its subcellular location is the cytoplasm. It carries out the reaction IMP + diphosphate = hypoxanthine + 5-phospho-alpha-D-ribose 1-diphosphate. It catalyses the reaction GMP + diphosphate = guanine + 5-phospho-alpha-D-ribose 1-diphosphate. Its pathway is purine metabolism; IMP biosynthesis via salvage pathway; IMP from hypoxanthine: step 1/1. Functionally, converts guanine to guanosine monophosphate, and hypoxanthine to inosine monophosphate. Transfers the 5-phosphoribosyl group from 5-phosphoribosylpyrophosphate onto the purine. Plays a central role in the generation of purine nucleotides through the purine salvage pathway. In Bos taurus (Bovine), this protein is Hypoxanthine-guanine phosphoribosyltransferase (HPRT1).